A 411-amino-acid chain; its full sequence is Dual specificity protein phosphatase Mpk3 (411 aa).

The Rhodanese domain maps to 22 to 149 (DSKDLILLDC…FRQAFPEWCE (128 aa)). Positions 184–197 (DSACSSSAESSDCE) are enriched in low complexity. The interval 184–209 (DSACSSSAESSDCESSSHHHHHHSHH) is disordered. Residues 214–358 (APVEIIPGLL…LLSFESQLRL (145 aa)) form the Tyrosine-protein phosphatase domain. Residue Cys302 is the Phosphocysteine intermediate of the active site.

The protein belongs to the protein-tyrosine phosphatase family. Non-receptor class dual specificity subfamily. Interacts (via N-terminal region) with phosphorylated rl. In terms of tissue distribution, ubiquitous expression in eye and wing imaginal disks. Enriched in ovary.

The protein localises to the cytoplasm. The catalysed reaction is O-phospho-L-tyrosyl-[protein] + H2O = L-tyrosyl-[protein] + phosphate. The enzyme catalyses O-phospho-L-seryl-[protein] + H2O = L-seryl-[protein] + phosphate. It catalyses the reaction O-phospho-L-threonyl-[protein] + H2O = L-threonyl-[protein] + phosphate. Its activity is regulated as follows. Activity abolished by tyrosine phosphatase inhibitor sodium vanadate. Activated by rl. Negatively regulates the activity of members of the MAP kinase family in response to changes in the cellular environment. Has a specificity for the ERK family. Acts as a negative regulator in a variety of developmental processes including cell differentiation and proliferation controlled by the Ras/ERK pathway. Suppresses the photoreceptor cell differentiation and wing vein formation. Required for proper oogenesis and early embryogenesis. Functions autonomously in a subset of photoreceptor progenitor cells in eye imaginal disks. Also appears to be required in surrounding non-neuronal cells for ommatidial patterning and photoreceptor differentiation. Plays a role in the maintenance of epithelial integrity during tracheal development. This chain is Dual specificity protein phosphatase Mpk3 (Mkp3), found in Drosophila melanogaster (Fruit fly).